The primary structure comprises 215 residues: MRKRISAIIMTLFMVFMSCNNGGPELKSDEVAKSDGTVLDLAKVSKKIKEASAFAASVKEVETLVKSVDELAKAIGKKIKNDDDGFDTEANKNGSLLAGTLQLMFAVGTKLESLEKIAGISDEVRGKVIVVKTENTALITKLKGGDASLGKNDASDSDAKNAIDKSDVTGGKVRKSLFKLNTAVDALLKAAEGEVEAAIKELTAPVKVEKPSQNN.

The signal sequence occupies residues 1-18; the sequence is MRKRISAIIMTLFMVFMS. A lipid anchor (N-palmitoyl cysteine) is attached at Cys-19. A lipid anchor (S-diacylglycerol cysteine) is attached at Cys-19.

The protein belongs to the variable small protein (Vsp) family.

The protein localises to the cell outer membrane. Its function is as follows. The Vlp and Vsp proteins are antigenically distinct proteins, only one vlp or vsp gene is transcriptionally active at any one time. Switching between these genes is a mechanism of host immune response evasion. The sequence is that of Variable small protein 6 from Borrelia hermsii.